Here is a 59-residue protein sequence, read N- to C-terminus: MANTVKVTQTRSSIGRLPKHKATLRGLGLRRIGHTVELEDTPCVRGMINQVYYMVKVEG.

Belongs to the universal ribosomal protein uL30 family. In terms of assembly, part of the 50S ribosomal subunit.

The sequence is that of Large ribosomal subunit protein uL30 from Aeromonas hydrophila subsp. hydrophila (strain ATCC 7966 / DSM 30187 / BCRC 13018 / CCUG 14551 / JCM 1027 / KCTC 2358 / NCIMB 9240 / NCTC 8049).